Consider the following 520-residue polypeptide: Glutamyl-tRNA(Gln) amidotransferase subunit A (520 aa).

Active-site charge relay system residues include Lys-80 and Ser-155. The Acyl-ester intermediate role is filled by Ser-179.

Belongs to the amidase family. GatA subfamily. As to quaternary structure, heterotrimer of A, B and C subunits.

The enzyme catalyses L-glutamyl-tRNA(Gln) + L-glutamine + ATP + H2O = L-glutaminyl-tRNA(Gln) + L-glutamate + ADP + phosphate + H(+). Its function is as follows. Allows the formation of correctly charged Gln-tRNA(Gln) through the transamidation of misacylated Glu-tRNA(Gln) in organisms which lack glutaminyl-tRNA synthetase. The reaction takes place in the presence of glutamine and ATP through an activated gamma-phospho-Glu-tRNA(Gln). The chain is Glutamyl-tRNA(Gln) amidotransferase subunit A from Renibacterium salmoninarum (strain ATCC 33209 / DSM 20767 / JCM 11484 / NBRC 15589 / NCIMB 2235).